A 682-amino-acid chain; its full sequence is Activating transcription factor 7-interacting protein 2 (682 aa).

Residues Ser120–Gln148 are disordered. Residues Ser137 to Gln148 show a composition bias toward polar residues. Residues Glu328 to Val378 adopt a coiled-coil conformation. Phosphoserine is present on Ser416. 2 stretches are compositionally biased toward polar residues: residues Ile418 to Ser451 and Glu462 to Asn490. Disordered regions lie at residues Ile418–Ala491 and Asn513–Pro538. Phosphoserine is present on residues Ser488 and Ser521. A compositionally biased stretch (polar residues) spans Lys528–Pro538. The region spanning Pro575 to Asn680 is the Fibronectin type-III domain.

The protein belongs to the MCAF family. Interacts with MBD1, SETDB1 and SP1. Probably forms a complex with SETDB1 and MBD1.

It localises to the nucleus. Recruiter that couples transcriptional factors to general transcription apparatus and thereby modulates transcription regulation and chromatin formation. Can both act as an activator or a repressor depending on the context. Mediates MBD1-dependent transcriptional repression, probably by recruiting complexes containing SETDB1. The complex formed with MBD1 and SETDB1 represses transcription and probably couples DNA methylation and histone H3 'Lys-9' trimethylation (H3K9me3) activity. The sequence is that of Activating transcription factor 7-interacting protein 2 (ATF7IP2) from Homo sapiens (Human).